Here is a 295-residue protein sequence, read N- to C-terminus: Undecaprenyl-diphosphatase (295 aa).

The next 7 helical transmembrane spans lie at 12–34 (IAIA…HAVV), 50–70 (FLPF…LYFW), 95–115 (IFML…LLEH), 120–140 (LFES…LLLF), 209–229 (AHFS…LEVP), 243–263 (TAAL…AFLM), and 272–292 (WALK…LAWL).

The protein belongs to the UppP family.

The protein resides in the cell inner membrane. The catalysed reaction is di-trans,octa-cis-undecaprenyl diphosphate + H2O = di-trans,octa-cis-undecaprenyl phosphate + phosphate + H(+). Its function is as follows. Catalyzes the dephosphorylation of undecaprenyl diphosphate (UPP). Confers resistance to bacitracin. The protein is Undecaprenyl-diphosphatase of Granulibacter bethesdensis (strain ATCC BAA-1260 / CGDNIH1).